We begin with the raw amino-acid sequence, 419 residues long: Putative polyketide beta-ketoacyl synthase 2 (419 aa).

The Ketosynthase family 3 (KS3) domain occupies 10 to 413 (TRRTAVTGIG…GSNAALVLRP (404 aa)).

It belongs to the thiolase-like superfamily. Beta-ketoacyl-ACP synthases family.

Its pathway is antibiotic biosynthesis; curamycin biosynthesis. This chain is Putative polyketide beta-ketoacyl synthase 2 (curB), found in Streptomyces cyaneus (Streptomyces curacoi).